A 411-amino-acid chain; its full sequence is POU domain, class 4, transcription factor 2 (411 aa).

Residues 29 to 95 (LHSASPGSSA…SEAMRRACLP (67 aa)) form a disordered region. The span at 31 to 52 (SASPGSSAPAAPSASSPSSSSN) shows a compositional bias: low complexity. Composition is skewed to gly residues over residues 53–68 (AGGGGGGGGGGGGGGR) and 76–86 (GSGGSGGGGGS). The interval 93–239 (CLPTPPSNIF…MHQAALSMAH (147 aa)) is required for transcriptional activation. The short motif at 112-121 (RAEALAAVDI) is the POU-IV box element. Residues 154-168 (SAASSSSVPISHPSA) are compositionally biased toward low complexity. The interval 154 to 190 (SAASSSSVPISHPSALAGTHHHHHHHHHHHHQPHQAL) is disordered. Residues 172–186 (THHHHHHHHHHHHQP) show a composition bias toward basic residues. The Nuclear speckle targeting signal signature appears at 173-187 (HHHHHHHHHHHHQPH). The tract at residues 240 to 411 (AHGLPSHMGC…QKRMKYSAGI (172 aa)) is required for DNA-binding and transcriptional repression. The POU-specific domain maps to 252 to 329 (DVDADPRDLE…ILQAWLEEAE (78 aa)). A DNA-binding region (homeobox) is located at residues 347–406 (KKRKRTSIAAPEKRSLEAYFAIQPRPSSEKIAAIAEKLDLKKNVVRVWFCNQRQKQKRMK).

Belongs to the POU transcription factor family. Class-4 subfamily. In terms of assembly, isoform 2: Interacts with POU4F1 isoform 1; this interaction inhibits both POU4F1 DNA-binding and transcriptional activities. Isoform 2: Interacts (C-terminus) with ESR1 (via DNA-binding domain); this interaction increases the estrogen receptor ESR1 transcriptional activity in a DNA- and ligand 17-beta-estradiol-independent manner. Isoform 2: Interacts (via C-terminus) with TP53 (via N-terminus). Interacts with DLX1 (via homeobox DNA-binding domain); this interaction suppresses DLX1-mediated transcriptional activity in postnatal retina enhancing retinal ganglion cell (RGC) differentiation. Interacts with DLX2 (via homeobox DNA-binding domain); this interaction enhances RGC differentiation. Isoform 1: Interacts (via C-terminus) with ISL1 (via C-terminus). Isoform 1: Interacts with ISL2. Isoform 1: Interacts with LHX2. In terms of tissue distribution, expressed in retinal ganglion cells (RGCs). Expressed in mature osteoclasts. Expressed in cells of layers of the superior colliculus and the adjacent periaqueductal gray (at protein level). Expressed in the brain, peripheral sensory nervous system and retina. Expressed in the optical, intermediate, and deep gray areas of the superior colliculus, the dorsal column of the mesencephalic and pontine central gray, and the lateral interpeduncular nucleus of the brain. Expressed predominantly in postmitotic, terminally differentiated neurons. Expressed in ganglion cell layer (GCL) of the retina.

It localises to the nucleus. Its subcellular location is the nucleus speckle. It is found in the cytoplasm. Functionally, tissue-specific DNA-binding transcription factor involved in the development and differentiation of target cells. Functions either as activator or repressor by modulating the rate of target gene transcription through RNA polymerase II enzyme in a promoter-dependent manner. Binds to the consensus octamer motif 5'-AT[A/T]A[T/A]T[A/T]A-3' of promoter of target genes. Plays a fundamental role in the gene regulatory network essential for retinal ganglion cell (RGC) differentiation. Binds to an octamer site to form a ternary complex with ISL1; cooperates positively with ISL1 and ISL2 to potentiate transcriptional activation of RGC target genes being involved in RGC fate commitment in the developing retina and RGC axon formation and pathfinding. Inhibits DLX1 and DLX2 transcriptional activities preventing DLX1- and DLX2-mediated ability to promote amacrine cell fate specification. In cooperation with TP53 potentiates transcriptional activation of BAX promoter activity increasing neuronal cell apoptosis. Negatively regulates BAX promoter activity in the absence of TP53. Acts as a transcriptional coactivator via its interaction with the transcription factor ESR1 by enhancing its effect on estrogen response element (ERE)-containing promoter. Antagonizes the transcriptional stimulatory activity of POU4F1 by preventing its binding to an octamer motif. Involved in TNFSF11-mediated terminal osteoclast differentiation. This is POU domain, class 4, transcription factor 2 from Mus musculus (Mouse).